Reading from the N-terminus, the 349-residue chain is Green-sensitive opsin-2 (349 aa).

The Extracellular portion of the chain corresponds to 1–36; that stretch reads MNGTEGNNFYVPLSNRTGLVRSPFEYPQYYLAEPWQ. Asn-2 and Asn-15 each carry an N-linked (GlcNAc...) asparagine glycan. A helical transmembrane segment spans residues 37-61; it reads FKLLAVYMFFLICLGLPINGLTLIC. Over 62–73 the chain is Cytoplasmic; sequence TAQHKKLRQPLN. Residues 74–99 traverse the membrane as a helical segment; the sequence is FILVNLAVAGAIMVCFGFTVTFYTAI. At 100–113 the chain is on the extracellular side; sequence NGYFALGPTGCAVE. The cysteines at positions 110 and 187 are disulfide-linked. A helical transmembrane segment spans residues 114 to 133; that stretch reads GFMATLGGEVALWSLVVLAI. The Cytoplasmic portion of the chain corresponds to 134–152; the sequence is ERYIVVCKPMGSFKFSSTH. A helical membrane pass occupies residues 153–176; the sequence is ASAGIAFTWVMAMACAAPPLVGWS. Residues 177–202 lie on the Extracellular side of the membrane; the sequence is RYIPEGIQCSCGPDYYTLNPEYNNES. The helical transmembrane segment at 203 to 230 threads the bilayer; that stretch reads YVLYMFICHFILPVTIIFFTYGRLVCTV. Topologically, residues 231–252 are cytoplasmic; sequence KAAAAQQQDSASTQKAEREVTK. A helical membrane pass occupies residues 253–276; that stretch reads MVILMVLGFLVAWTPYATVAAWIF. Topologically, residues 277 to 284 are extracellular; sequence FNKGAAFS. A helical membrane pass occupies residues 285-309; that stretch reads AQFMAIPAFFSKTSALYNPVIYVLL. Lys-296 carries the N6-(retinylidene)lysine modification. Topologically, residues 310 to 349 are cytoplasmic; that stretch reads NKQFRSCMLTTLFCGKNPLGDEESSTVSTSKTEVSSVSPA. A disordered region spans residues 329-349; that stretch reads GDEESSTVSTSKTEVSSVSPA. Low complexity predominate over residues 334 to 349; that stretch reads STVSTSKTEVSSVSPA.

Belongs to the G-protein coupled receptor 1 family. Opsin subfamily. Phosphorylated on some or all of the serine and threonine residues present in the C-terminal region. As to expression, the color pigments are found in the cone photoreceptor cells.

Its subcellular location is the membrane. Visual pigments are the light-absorbing molecules that mediate vision. They consist of an apoprotein, opsin, covalently linked to cis-retinal. This is Green-sensitive opsin-2 from Carassius auratus (Goldfish).